We begin with the raw amino-acid sequence, 349 residues long: MGFSPLISCSAMGALILSCLLLQASNSNAQLRPDFYFRTCPSVFNIIGDIIVDELRTDPRIAASLLRLHFHDCFVRGCDASILLDNSTSFRTEKDAAPNANSARGFGVIDRMKTSLERACPRTVSCADVLTIASQISVLLSGGPWWPVPLGRRDSVEAFFDLANTALPSPFFTLAQLKKAFADVGLNRPSDLVALSGGHTFGRAQCQFVTPRLYNFNGTNRPDPTLDPTYLVQLRALCPQNGNGTVLVNFDVVTPNTFDRQYYTNLRNGKGLIQSDQELFSTPGADTIPLVNLYSSNTFAFFGAFVDAMIRMGNLRPLTGTQGEIRQNCRVVNSRIRGMENDDGVVSSI.

The first 29 residues, 1–29, serve as a signal peptide directing secretion; sequence MGFSPLISCSAMGALILSCLLLQASNSNA. 4 cysteine pairs are disulfide-bonded: C40-C120, C73-C78, C126-C329, and C206-C238. The Proton acceptor role is filled by H71. 5 residues coordinate Ca(2+): D72, V75, G77, D79, and S81. N86 is a glycosylation site (N-linked (GlcNAc...) asparagine). P168 provides a ligand contact to substrate. Residue H199 participates in heme b binding. T200 is a Ca(2+) binding site. N-linked (GlcNAc...) asparagine glycosylation is found at N217 and N243. 3 residues coordinate Ca(2+): D251, T254, and D259.

It belongs to the peroxidase family. Classical plant (class III) peroxidase subfamily. The cofactor is Ca(2+). Heme b serves as cofactor.

It is found in the secreted. It localises to the vacuole. It catalyses the reaction 2 a phenolic donor + H2O2 = 2 a phenolic radical donor + 2 H2O. Removal of H(2)O(2), oxidation of toxic reductants, biosynthesis and degradation of lignin, suberization, auxin catabolism, response to environmental stresses such as wounding, pathogen attack and oxidative stress. These functions might be dependent on each isozyme/isoform in each plant tissue. The sequence is that of Peroxidase C3 (PRXC3) from Armoracia rusticana (Horseradish).